Reading from the N-terminus, the 484-residue chain is UBX domain-containing protein 11 (484 aa).

Residues M1–I28 form a disordered region. Residues H69–D147 are a coiled coil. One can recognise an SEP domain in the interval L227–P291. The 78-residue stretch at P389 to L466 folds into the UBX domain. A phosphoserine mark is found at S478 and S482.

Interacts with GNA12, GNA13, RND1, RND2 and RND3.

The protein resides in the cytoplasm. It is found in the cytoskeleton. In terms of biological role, may be involved in the reorganization of actin cytoskeleton mediated by RND1, RND2 and RND3. Promotes RHOA activation mediated by GNA12 and GNA13. This Mus musculus (Mouse) protein is UBX domain-containing protein 11 (Ubxn11).